The chain runs to 631 residues: MASPGASTVFLLALTILAGTQALTPTHYLTKPDVERLRASLDRPFTSLESAFYSIVGLSSLGVQVPDVKKACAFIKSNLDPGNVDSLFYAAQSSQALSGCEISISNETKDLLLAAVSEDSSVTQIYHAVAALSGFGLPLASQEALSALTARLSKEETVLATVQALQTASHLSQQADLRSIVEEIEDLVARLDELGGVYLQFEEGLETTALFVAATYKLMDHVGTEPSIKEDQVIQLMNAIFSKKNFESLSEAFSVASAAAALSQNRYHVPVVVVPEGTPSDTHEQAILRLQVTNVLSQPLTQATVKLEHAKSVASRATVLQKTSFTPVGDVFELNFMNVKFSSGYYDFSVKVEGDNRYIANSVELRVKISTEVGITNVDLSTVDKDQSIAPKTTRVTYPAKAKGTFIADSHQNFALFFQLVDVNTGAELTPHQTFVRLHNQKTGQEVVFVAEPDSKNVYKFELDTSERKIEFDSASGTYTLYLIIGDATLKNPILWNVADVVIKFPEEDAPSTVLSKNLFTPKQEIQHLFREPEKRPPTVVSNTFTALILSPLLLLFALWIRIGANVSNFTFAPSTIIFHLGHAAMLGLMYVYWTQLNMFQTLKYLAILGSVTFLAGNRMLAQQAIKRTAH.

The signal sequence occupies residues 1–22; that stretch reads MASPGASTVFLLALTILAGTQA. The Lumenal segment spans residues 23-540; it reads LTPTHYLTKP…REPEKRPPTV (518 aa). N-linked (GlcNAc...) asparagine glycosylation is present at asparagine 106. Lysine 154 participates in a covalent cross-link: Glycyl lysine isopeptide (Lys-Gly) (interchain with G-Cter in ubiquitin). A helical transmembrane segment spans residues 541–561; it reads VSNTFTALILSPLLLLFALWI. Residues 562 to 571 lie on the Cytoplasmic side of the membrane; it reads RIGANVSNFT. Residues 572 to 592 form a helical membrane-spanning segment; it reads FAPSTIIFHLGHAAMLGLMYV. The Lumenal segment spans residues 593–596; the sequence is YWTQ. The chain crosses the membrane as a helical span at residues 597–617; the sequence is LNMFQTLKYLAILGSVTFLAG. Over 618–631 the chain is Cytoplasmic; sequence NRMLAQQAIKRTAH.

This sequence belongs to the SWP1 family. In terms of assembly, component of the oligosaccharyltransferase (OST) complex. OST exists in two different complex forms which contain common core subunits RPN1, RPN2, OST48, OST4, DAD1 and TMEM258, either STT3A or STT3B as catalytic subunits, and form-specific accessory subunits. STT3A complex assembly occurs through the formation of 3 subcomplexes. Subcomplex 1 contains RPN1 and TMEM258, subcomplex 2 contains the STT3A-specific subunits STT3A, DC2/OSTC, and KCP2 as well as the core subunit OST4, and subcomplex 3 contains RPN2, DAD1, and OST48. The STT3A complex can form stable complexes with the Sec61 complex or with both the Sec61 and TRAP complexes. Interacts with DDI2. Interacts with TMEM35A/NACHO.

The protein resides in the endoplasmic reticulum. It localises to the endoplasmic reticulum membrane. Its pathway is protein modification; protein glycosylation. Functionally, subunit of the oligosaccharyl transferase (OST) complex that catalyzes the initial transfer of a defined glycan (Glc(3)Man(9)GlcNAc(2) in eukaryotes) from the lipid carrier dolichol-pyrophosphate to an asparagine residue within an Asn-X-Ser/Thr consensus motif in nascent polypeptide chains, the first step in protein N-glycosylation. N-glycosylation occurs cotranslationally and the complex associates with the Sec61 complex at the channel-forming translocon complex that mediates protein translocation across the endoplasmic reticulum (ER). All subunits are required for a maximal enzyme activity. The chain is Dolichyl-diphosphooligosaccharide--protein glycosyltransferase subunit 2 from Canis lupus familiaris (Dog).